A 276-amino-acid chain; its full sequence is Carboxysome assembly protein CcmO (276 aa).

BMC domains are found at residues 16–100 (ALGV…AVLP) and 120–204 (AIGL…DSLP). 2 disordered regions span residues 200-219 (MDSL…LQLP) and 252-276 (QSAL…RDDQ).

This sequence belongs to the bacterial microcompartments protein family. As to quaternary structure, homooligomerizes, possibly as a trimer, interacts with CcmK2 in the carboxysome.

It is found in the carboxysome. Its function is as follows. Required for formation of the carboxysome, a polyhedral inclusion where RuBisCO (ribulose bisphosphate carboxylase, rbcL-rbcS) is sequestered. Required for recruitment of major shell protein CcmK2 to the pre-carboxysome. Suggested to be a carboxysome shell protein, but it is not detected in gels, mass spectrometry or by protein sequencing. Beta-carboxysome assembly initiates when soluble RuBisCO is condensed into a liquid matrix in a pre-carboxysome by the RbcS-like domains of probably both CcmM58 and CcmM35. CcmN interacts with the N-terminus of CcmM58, and then recruits the CcmK2 major shell protein via CcmN's encapsulation peptide. Shell formation requires CcmK proteins and CcmO. CcmL caps the otherwise elongated carboxysome. Once fully encapsulated carboxysomes are formed, they migrate within the cell probably via interactions with the cytoskeleton. The protein is Carboxysome assembly protein CcmO of Synechococcus elongatus (strain ATCC 33912 / PCC 7942 / FACHB-805) (Anacystis nidulans R2).